A 572-amino-acid chain; its full sequence is Urease subunit alpha (572 aa).

Residues 134–572 (GGIDSHIHFI…LPMTQRYFLF (439 aa)) form the Urease domain. Ni(2+) contacts are provided by H139, H141, and K222. K222 is subject to N6-carboxylysine. Substrate is bound at residue H224. H251 and H277 together coordinate Ni(2+). H325 (proton donor) is an active-site residue. D365 is a binding site for Ni(2+).

This sequence belongs to the metallo-dependent hydrolases superfamily. Urease alpha subunit family. In terms of assembly, heterotrimer of UreA (gamma), UreB (beta) and UreC (alpha) subunits. Three heterotrimers associate to form the active enzyme. The cofactor is Ni cation. Carboxylation allows a single lysine to coordinate two nickel ions.

It is found in the cytoplasm. The enzyme catalyses urea + 2 H2O + H(+) = hydrogencarbonate + 2 NH4(+). Its pathway is nitrogen metabolism; urea degradation; CO(2) and NH(3) from urea (urease route): step 1/1. In Polaromonas sp. (strain JS666 / ATCC BAA-500), this protein is Urease subunit alpha.